The following is an 81-amino-acid chain: Protein GPR15LG (81 aa).

Positions methionine 1–glycine 24 are cleaved as a signal peptide. 2 disulfides stabilise this stretch: cysteine 40–cysteine 63 and cysteine 41–cysteine 60.

In terms of assembly, interacts with SUSD2; the interaction is direct.

The protein resides in the secreted. Functionally, highly cationic protein that has multiple functions. Acts as a chemotactic factor that mediates lymphocytes recruitment to epithelia through binding and activation of the G-protein coupled receptor GPR15. May be a tumor suppressor; together with SUSD2 has a growth inhibitory effect on colon cancer cells which includes G1 cell cycle arrest. May regulate keratinocyte proliferation. In addition, through activation of Mas-related G protein-coupled receptors (MRGPRs) contributes to pruritogenesis by activating itch-selective sensory neurons and mast cells degranulation. Has antimicrobial activity against Gram-positive bacteria, including Staphylococcus aureus and Actinomyces spec., and Mycoplasma hominis and lentivirus. The chain is Protein GPR15LG (GPR15LG) from Sus scrofa (Pig).